The chain runs to 259 residues: Kynurenine formamidase (259 aa).

Positions 34–38 match the HGGXW motif; that stretch reads HGGAW. The Nucleophile role is filled by S103. Residues D196 and H228 contribute to the active site.

The protein belongs to the kynurenine formamidase family. As to quaternary structure, homodimer.

It catalyses the reaction N-formyl-L-kynurenine + H2O = L-kynurenine + formate + H(+). It participates in amino-acid degradation; L-tryptophan degradation via kynurenine pathway; L-kynurenine from L-tryptophan: step 2/2. Its function is as follows. Catalyzes the hydrolysis of N-formyl-L-kynurenine to L-kynurenine, the second step in the kynurenine pathway of tryptophan degradation. Kynurenine may be further oxidized to nicotinic acid, NAD(H) and NADP(H). Required for elimination of toxic metabolites. This Meyerozyma guilliermondii (strain ATCC 6260 / CBS 566 / DSM 6381 / JCM 1539 / NBRC 10279 / NRRL Y-324) (Yeast) protein is Kynurenine formamidase.